We begin with the raw amino-acid sequence, 282 residues long: Elongation factor Ts (282 aa).

The tract at residues 79-82 (TDFV) is involved in Mg(2+) ion dislocation from EF-Tu.

Belongs to the EF-Ts family.

It is found in the cytoplasm. In terms of biological role, associates with the EF-Tu.GDP complex and induces the exchange of GDP to GTP. It remains bound to the aminoacyl-tRNA.EF-Tu.GTP complex up to the GTP hydrolysis stage on the ribosome. The chain is Elongation factor Ts from Shewanella loihica (strain ATCC BAA-1088 / PV-4).